Reading from the N-terminus, the 250-residue chain is MLGSVKKTLFGVLCLGALCLRGLMAEPDAKELVSLGIESVKKQDFAQAKAHFEKACELKEGFGCVFLGAFYEEGKGVGKDLKKAIQFYTKGCELNDGYGCRLLGNLYYNGQGVSKDAKKASQYYSKSCELNHAEGCTVLGSLHHYGVGTPKDLRKALDLYEKACDLKDSPGCINAGYMYGVAKNFKEAIVRYSKACELKDGRGCYNLGVMQYNAQGTAKDEKQAVENFKKGCKSSVKEACDALKELKIEL.

The signal sequence occupies residues 1–25 (MLGSVKKTLFGVLCLGALCLRGLMA). TPR repeat units follow at residues 29-62 (AKELVSLGIESVKKQDFAQAKAHFEKACELKEGF), 67-98 (LGAFYEEGKGVGKDLKKAIQFYTKGCELNDGY), 100-133 (CRLLGNLYYNGQGVSKDAKKASQYYSKSCELNHA), 134-169 (EGCTVLGSLHHYGVGTPKDLRKALDLYEKACDLKDS), and 170-202 (PGCINAGYMYGVAKNFKEAIVRYSKACELKDGR). Cystine bridges form between C56/C64, C92/C100, C128/C136, C164/C172, C196/C204, and C232/C240.

The protein belongs to the hcp beta-lactamase family.

The protein localises to the secreted. It carries out the reaction a beta-lactam + H2O = a substituted beta-amino acid. Its activity is regulated as follows. Inhibited by cloxacillin and oxacillin but not by ACA derivatives or metal chelators. Slowly hydrolyzes 6-aminopenicillinic acid and 7-aminocephalosporanic acid (ACA) derivatives. May be involved in the synthesis of the cell wall peptidoglycan. In Helicobacter pylori (strain J99 / ATCC 700824) (Campylobacter pylori J99), this protein is Beta-lactamase HcpA (hcpA).